The primary structure comprises 430 residues: Probable protein phosphatase 1N (430 aa).

Residues 16-65 form a disordered region; the sequence is CKKKEREKEGREEEEEEEAGRRAPEGPRSLLTAPRRAQRPHGGAEASGGL. The segment covering 17 to 26 has biased composition (basic and acidic residues); sequence KKKEREKEGR. Residues 66-326 form the PPM-type phosphatase domain; sequence RFGASAAQGW…DNMTCILVCF (261 aa). Residues Asp103, Gly104, Asp274, and Asp317 each contribute to the Mn(2+) site. The disordered stretch occupies residues 407 to 430; that stretch reads GEKGQDGAGKSNPTHLGSALDMEA.

It belongs to the PP2C family. Mg(2+) serves as cofactor. The cofactor is Mn(2+).

The catalysed reaction is O-phospho-L-seryl-[protein] + H2O = L-seryl-[protein] + phosphate. The enzyme catalyses O-phospho-L-threonyl-[protein] + H2O = L-threonyl-[protein] + phosphate. In Homo sapiens (Human), this protein is Probable protein phosphatase 1N (PPM1N).